Reading from the N-terminus, the 455-residue chain is GTPase Der (455 aa).

EngA-type G domains are found at residues 4–169 (PVVA…PPKS) and 178–353 (IQLA…EQHR). GTP is bound by residues 10-17 (GRPNVGKS), 57-61 (DTGGL), 120-123 (NKCE), 184-191 (GRPNVGKS), 231-235 (DTAGI), and 296-299 (NKWD). The KH-like domain maps to 354-439 (RRVSTSVVNE…PLKLFWRGKQ (86 aa)).

The protein belongs to the TRAFAC class TrmE-Era-EngA-EngB-Septin-like GTPase superfamily. EngA (Der) GTPase family. As to quaternary structure, associates with the 50S ribosomal subunit.

Its function is as follows. GTPase that plays an essential role in the late steps of ribosome biogenesis. This Synechococcus sp. (strain WH7803) protein is GTPase Der.